Here is a 294-residue protein sequence, read N- to C-terminus: tRNA dimethylallyltransferase (294 aa).

10 to 17 (GITASGKS) contacts ATP. Residue 12-17 (TASGKS) participates in substrate binding. The interval 36 to 39 (DSKQ) is interaction with substrate tRNA.

It belongs to the IPP transferase family. In terms of assembly, monomer. Mg(2+) serves as cofactor.

The catalysed reaction is adenosine(37) in tRNA + dimethylallyl diphosphate = N(6)-dimethylallyladenosine(37) in tRNA + diphosphate. Its function is as follows. Catalyzes the transfer of a dimethylallyl group onto the adenine at position 37 in tRNAs that read codons beginning with uridine, leading to the formation of N6-(dimethylallyl)adenosine (i(6)A). The protein is tRNA dimethylallyltransferase of Wolbachia sp. subsp. Drosophila simulans (strain wRi).